The chain runs to 159 residues: Afifavidin (159 aa).

A signal peptide spans 1–23; it reads MRRLASLAVALPLLAVVASPALA. Positions 36–151 constitute an Avidin-like domain; the sequence is GVPAVSSSWV…GSDTFTLVNK (116 aa). Residues Asn-46, Ser-50, Tyr-66, Asn-68, and Gly-74 each coordinate biotin. Cys-75 and Cys-104 are joined by a disulfide. 3 residues coordinate biotin: Ser-106, Thr-108, and Asp-144.

The protein belongs to the avidin/streptavidin family. As to quaternary structure, exhibits a dynamic oligomeric assembly: the apo form self-assembles mostly into toroid-shaped homooctamers, with a small fraction of homodimers, yet upon biotin binding the intact afifavidin consists solely of the dimer.

It localises to the secreted. Its function is as follows. The exact role played by afifavidin is still obscure. Forms a strong non-covalent complex with biotin and 2-iminobiotin. The protein is Afifavidin of Afifella pfennigii (Rhodobium pfennigii).